The primary structure comprises 209 residues: MSNDKAKHPMKVGIGGPVGSGKTALIEVLCKKMKTDYQLAVVTNDIYTKEDQQILINAHALESDRIIGVETGGCPHTAIREDVSMNLLAIEELIDKFNNLDIIFIESGGDNLSATFSPELSDWNLYVIDVAAGDKIPRKGGPGITKSDFLIINKIDLAQYVGASLDVMKFDTHTMRNNRPWTFTNLKTGYGIESVINFLREKKLINNKM.

16-23 (GPVGSGKT) is a GTP binding site.

The protein belongs to the SIMIBI class G3E GTPase family. UreG subfamily. Homodimer. UreD, UreF and UreG form a complex that acts as a GTP-hydrolysis-dependent molecular chaperone, activating the urease apoprotein by helping to assemble the nickel containing metallocenter of UreC. The UreE protein probably delivers the nickel.

The protein resides in the cytoplasm. Its function is as follows. Facilitates the functional incorporation of the urease nickel metallocenter. This process requires GTP hydrolysis, probably effectuated by UreG. The sequence is that of Urease accessory protein UreG from Blochmanniella floridana.